The primary structure comprises 239 residues: 7-cyano-7-deazaguanine synthase (239 aa).

8-18 (FSGGLDSTACL) is a binding site for ATP. Zn(2+)-binding residues include C194, C209, C212, and C215.

The protein belongs to the QueC family. It depends on Zn(2+) as a cofactor.

The enzyme catalyses 7-carboxy-7-deazaguanine + NH4(+) + ATP = 7-cyano-7-deazaguanine + ADP + phosphate + H2O + H(+). Its pathway is purine metabolism; 7-cyano-7-deazaguanine biosynthesis. Functionally, catalyzes the ATP-dependent conversion of 7-carboxy-7-deazaguanine (CDG) to 7-cyano-7-deazaguanine (preQ(0)). In Pyrococcus horikoshii (strain ATCC 700860 / DSM 12428 / JCM 9974 / NBRC 100139 / OT-3), this protein is 7-cyano-7-deazaguanine synthase.